We begin with the raw amino-acid sequence, 545 residues long: Chaperonin GroEL 2 (545 aa).

ATP-binding positions include Thr30–Pro33, Lys51, Asp87–Thr91, Gly415, Asn479–Ala481, and Asp495.

The protein belongs to the chaperonin (HSP60) family. Forms a cylinder of 14 subunits composed of two heptameric rings stacked back-to-back. Interacts with the co-chaperonin GroES.

Its subcellular location is the cytoplasm. The enzyme catalyses ATP + H2O + a folded polypeptide = ADP + phosphate + an unfolded polypeptide.. Functionally, together with its co-chaperonin GroES, plays an essential role in assisting protein folding. The GroEL-GroES system forms a nano-cage that allows encapsulation of the non-native substrate proteins and provides a physical environment optimized to promote and accelerate protein folding. The sequence is that of Chaperonin GroEL 2 from Escherichia coli O1:K1 / APEC.